A 58-amino-acid chain; its full sequence is Sec-independent protein translocase protein TatA (58 aa).

The chain crosses the membrane as a helical span at residues 1-21 (MLSNIGFPGLILILVAILILF).

The protein belongs to the TatA/E family. In terms of assembly, forms a complex with TatC.

The protein localises to the cell membrane. Its function is as follows. Part of the twin-arginine translocation (Tat) system that transports large folded proteins containing a characteristic twin-arginine motif in their signal peptide across membranes. TatA could form the protein-conducting channel of the Tat system. The protein is Sec-independent protein translocase protein TatA of Bacillus cytotoxicus (strain DSM 22905 / CIP 110041 / 391-98 / NVH 391-98).